Consider the following 318-residue polypeptide: Porphobilinogen deaminase (318 aa).

Cysteine 245 is modified (S-(dipyrrolylmethanemethyl)cysteine).

It belongs to the HMBS family. Monomer. Dipyrromethane is required as a cofactor.

It catalyses the reaction 4 porphobilinogen + H2O = hydroxymethylbilane + 4 NH4(+). It participates in porphyrin-containing compound metabolism; protoporphyrin-IX biosynthesis; coproporphyrinogen-III from 5-aminolevulinate: step 2/4. The protein operates within porphyrin-containing compound metabolism; chlorophyll biosynthesis. Its function is as follows. Tetrapolymerization of the monopyrrole PBG into the hydroxymethylbilane pre-uroporphyrinogen in several discrete steps. The protein is Porphobilinogen deaminase of Prochlorococcus marinus (strain MIT 9215).